The primary structure comprises 418 residues: Putative competence-damage inducible protein (418 aa).

It belongs to the CinA family.

This chain is Putative competence-damage inducible protein, found in Streptococcus pneumoniae (strain 70585).